A 273-amino-acid polypeptide reads, in one-letter code: Zinc finger protein AZF2 (273 aa).

A disordered region spans residues 33 to 64 (LKRKRSKRQRSHSPSSSSSSPPRSRPKSQNQD). Residues 34-43 (KRKRSKRQRS) show a composition bias toward basic residues. Residues 44-54 (HSPSSSSSSPP) are compositionally biased toward low complexity. 2 consecutive C2H2-type zinc fingers follow at residues 106–128 (YKCNVCEKAFPSYQALGGHKASH) and 165–187 (HECSICHKVFPTGQALGGHKRCH). The tract at residues 195–215 (GGGGGSKSISHSGSVSSTVSE) is disordered. Over residues 201–213 (KSISHSGSVSSTV) the composition is skewed to low complexity.

As to expression, expressed in roots, radicles, cotyledons, hypocotyls, leaf veins, stems, sepals, petals, stamens, placenta, funiculi and maturated seeds.

Its subcellular location is the nucleus. Its function is as follows. Transcriptional repressor involved in the inhibition of plant growth under abiotic stress conditions. Can repress the expression of various genes, including osmotic stress and abscisic acid-repressive genes and auxin-inducible genes, by binding to their promoter regions in a DNA sequence-specific manner. Acts as a negative regulator of abscisic acid (ABA) signaling during seed germination. Probably involved in jasmonate (JA) early signaling response. May regulate the expression of the JA biosynthesis gene LOX3 and control the expression of TIFY10A/JAZ1, a key repressor in the JA signaling cascade. May act as a positive regulator of leaf senescence. Has been identified as a suppressor of the deficiency of yeast snf4 mutant to grow on non-fermentable carbon source. The protein is Zinc finger protein AZF2 (AZF2) of Arabidopsis thaliana (Mouse-ear cress).